Here is a 351-residue protein sequence, read N- to C-terminus: Paired box protein 2 homolog (351 aa).

The paired DNA-binding region spans 91–217; it reads SHTGVNQLGG…SSINRIVRNK (127 aa). Residues 94–150 are PAI subdomain; the sequence is GVNQLGGVFVNGRPLPDTIRAQIVEMSQHGTRPCDISRQLKVSHGCVSKILGRYYST. The RED subdomain stretch occupies residues 169 to 217; it reads RVVECIAGYKRANPTMFAWEIRQKLIEDQICGEENVPSVSSINRIVRNK. Residues 226–246 are compositionally biased toward polar residues; sequence PTSVTPSVARPSSATSQNQRS. Residues 226–258 are disordered; that stretch reads PTSVTPSVARPSSATSQNQRSPPRGVQQHMQQS.

It localises to the nucleus. The protein localises to the chromosome. Functionally, transcription factor. Involved in negatively modulating apoptosis in germline and somatic cells, acting in partial redundancy with transcription factor egl-38/PAX5, probably by directly regulating transcription of apoptosis regulator ced-9. May bind to the DNA sequence motif 5'-GTAACG-3' in regulatory elements. In Caenorhabditis elegans, this protein is Paired box protein 2 homolog.